A 210-amino-acid polypeptide reads, in one-letter code: Dynein regulatory complex protein 12 (210 aa).

Positions 1–23 (MPPKNKEKGKKSGAQKKKKNWGA) are disordered. The segment covering 7 to 20 (EKGKKSGAQKKKKN) has biased composition (basic residues). A coiled-coil region spans residues 49 to 161 (RDEARRAKAS…EAKYEEILHD (113 aa)). The interval 188 to 210 (HKEQQRQFGLTPPGSLRPPAPSL) is disordered.

The protein belongs to the DRC12 family. In terms of assembly, component of the nexin-dynein regulatory complex (N-DRC).

It localises to the cytoplasm. It is found in the cytoskeleton. Its subcellular location is the flagellum axoneme. Functionally, component of the nexin-dynein regulatory complex (N-DRC), a key regulator of ciliary/flagellar motility which maintains the alignment and integrity of the distal axoneme and regulates microtubule sliding in motile axonemes. The polypeptide is Dynein regulatory complex protein 12 (Homo sapiens (Human)).